A 33-amino-acid chain; its full sequence is Ice-structuring protein SS-3 (33 aa).

It belongs to the type-I AFP family.

In terms of biological role, antifreeze proteins lower the blood freezing point. The polypeptide is Ice-structuring protein SS-3 (Myoxocephalus scorpius (Shorthorn sculpin)).